The chain runs to 210 residues: Uracil phosphoribosyltransferase (210 aa).

Residues arginine 78, arginine 103, and 130-138 (DPMLATGGT) each bind 5-phospho-alpha-D-ribose 1-diphosphate. Uracil is bound by residues isoleucine 193 and 198–200 (GDA). Aspartate 199 is a 5-phospho-alpha-D-ribose 1-diphosphate binding site.

Belongs to the UPRTase family. The cofactor is Mg(2+).

The catalysed reaction is UMP + diphosphate = 5-phospho-alpha-D-ribose 1-diphosphate + uracil. It functions in the pathway pyrimidine metabolism; UMP biosynthesis via salvage pathway; UMP from uracil: step 1/1. Its activity is regulated as follows. Allosterically activated by GTP. Catalyzes the conversion of uracil and 5-phospho-alpha-D-ribose 1-diphosphate (PRPP) to UMP and diphosphate. In Stenotrophomonas maltophilia (strain R551-3), this protein is Uracil phosphoribosyltransferase.